We begin with the raw amino-acid sequence, 1049 residues long: Ataxin-2-like protein (1049 aa).

Position 1 is an N-acetylmethionine (methionine 1). Residues 1–54 (MLKPQPPQQTSQPQQPPPTQQAVARRSPGGTSPPNGGLPGPLTATAAPPGPPAA) form a disordered region. Serine 27 carries the phosphoserine modification. At threonine 45 the chain carries Phosphothreonine. The tract at residues 96–119 (SVRGQTTGKGPPQSPVFEGVYNNS) is interaction with MPL. Residue serine 109 is modified to Phosphoserine. Position 116 is a phosphotyrosine (tyrosine 116). The region spanning 120 to 197 (RMLHFLTAVV…VLLVHFRNVD (78 aa)) is the Sm domain. The residue at position 205 (lysine 205) is an N6-acetyllysine. Position 236 is a phosphoserine (serine 236). Tyrosine 262 carries the post-translational modification Phosphotyrosine. A Phosphoserine modification is found at serine 304. Tyrosine 307 carries the post-translational modification Phosphotyrosine. Positions 314 to 326 (ENDDGRTEEEKHS) are enriched in basic and acidic residues. 7 disordered regions span residues 314 to 522 (ENDD…RNLE), 554 to 573 (QFKL…FPSR), 578 to 704 (EAKG…LTAG), 736 to 772 (VSNS…PMMQ), 824 to 852 (SNPR…AEQP), 868 to 944 (HATQ…SSFP), and 999 to 1049 (PQGH…PPGN). Residues 328-340 (VQRQGSGRESPSL) are compositionally biased toward polar residues. Phosphoserine is present on residues serine 333 and serine 337. Lysine 346 is covalently cross-linked (Glycyl lysine isopeptide (Lys-Gly) (interchain with G-Cter in SUMO2)). Phosphotyrosine is present on tyrosine 347. Arginine 359 carries the post-translational modification Asymmetric dimethylarginine. Residues 361-378 (GVRCSSSRGGRPGLSSLP) are compositionally biased toward low complexity. Serine 389, serine 407, and serine 453 each carry phosphoserine. Low complexity predominate over residues 454–466 (PKSAAPAPVSASC). Over residues 475–487 (VASSASIPVTSSV) the composition is skewed to polar residues. Phosphoserine is present on residues serine 496 and serine 499. Residues 508 to 519 (DVKELPTKEPSR) are compositionally biased toward basic and acidic residues. Phosphoserine occurs at positions 560, 561, and 562. Over residues 578–587 (EAKGKEKEVD) the composition is skewed to basic and acidic residues. Serine 597 is subject to Phosphoserine. A Phosphothreonine modification is found at threonine 635. Phosphoserine is present on residues serine 637, serine 677, serine 683, and serine 687. Over residues 681-697 (STSTPTSPGPRTHSTPS) the composition is skewed to low complexity. 2 stretches are compositionally biased toward polar residues: residues 824–845 (SNPR…STPQ) and 878–902 (QPAT…QHQA). A compositionally biased stretch (low complexity) spans 935-944 (SAQSPQSSFP). Residues 1033–1042 (QVQSHPSQQL) show a composition bias toward polar residues.

Belongs to the ataxin-2 family. As to quaternary structure, interacts with MPL/TPOR and EPOR and dissociates after ligand stimulation. Interacts with DDX6, G3BP, and ATXN2. Interacts with PRMT1. Interacts with CIC and ATXN1. In terms of processing, thrombopoietin triggers the phosphorylation on tyrosine residues in a way that is dependent on MPL C-terminal domain. Post-translationally, asymmetrically dimethylated. Probably methylated by PRMT1. Expressed in cerebellum.

It is found in the membrane. It localises to the cytoplasm. The protein resides in the nucleus speckle. Its subcellular location is the cytoplasmic granule. Involved in the regulation of stress granule and P-body formation. This Mus musculus (Mouse) protein is Ataxin-2-like protein (Atxn2l).